A 1174-amino-acid chain; its full sequence is Male determiner protein Mdmd(III) (1174 aa).

The segment covering 1–15 (MNATDAESRKPENKP) has biased composition (basic and acidic residues). Disordered regions lie at residues 1–51 (MNAT…SGQR), 80–109 (KDGS…HPVE), and 136–259 (KQLS…LRRS). A compositionally biased stretch (low complexity) spans 16-35 (SSESSSSGSTSGSSDGEVSS). Residues 36–47 (KTYFKNNKSKVL) show a composition bias toward polar residues. The segment covering 80–92 (KDGSNEMLPKEDS) has biased composition (basic and acidic residues). Residues 93 to 102 (INTNHNYTTD) are compositionally biased toward polar residues. Residues 138 to 153 (LSAYRSRSRSTRLSYS) show a composition bias toward low complexity. A compositionally biased stretch (basic residues) spans 167–180 (SRYKKSVLRNRRTS). Positions 183–200 (HGRDSSTTKRSVSRDKDN) are enriched in basic and acidic residues. The segment covering 201-223 (RLRRRIGSSRSHTRSHSRFRRSE) has biased composition (basic residues). Over residues 235 to 259 (RSQERRHERRRSMSSDYERIALRRS) the composition is skewed to basic and acidic residues. The region spanning 348–531 (KKYIHGYINK…KVLFQVRRDG (184 aa)) is the MIF4G domain. An MI domain is found at 641–757 (ALRRTIYLTL…SWDVLDCIKL (117 aa)). Low complexity predominate over residues 840–857 (SAPSSSSSSSLSSELSAP). Disordered regions lie at residues 840–1045 (SAPS…SRTK) and 1096–1133 (KDNY…NHSR). Basic residues predominate over residues 869–909 (KKKHKGKNKKMTKKKNPSKKKEKTKKFVGKNKIAAKNKTIK). A compositionally biased stretch (basic and acidic residues) spans 910–924 (RRTDKDNSSSKDNFL). Positions 926–957 (SESSSNESISLDSLSSELFAPSSYSSSESSND) are enriched in low complexity. Residues 963 to 1001 (KHKGKNKKMTKKKNPSNKKEKTKKKLSKNKKAPNKNTKK) are compositionally biased toward basic residues. Residues 1010-1020 (SSESSISESKS) are compositionally biased toward low complexity. Positions 1034 to 1045 (RKKRVTSKSRTK) are enriched in basic residues. Basic and acidic residues predominate over residues 1103–1118 (QNHEISQRHDSEIKRR). Positions 1119–1130 (REERKKRHHEKN) are enriched in basic residues.

Belongs to the CWC22 family. Component of the spliceosome C complex.

Its subcellular location is the nucleus speckle. Its function is as follows. Male determiner protein (M-factor) that controls male somatic sexual differentiation. Acts as a dominant factor that regulates the mRNA splicing of transformer (tra) and doublesex (dsx) transcripts and promotes expression of male splice forms of tra and dsx. Probably acts as a component of the spliceosome C complex required for mRNA splicing factor and exon-junction complex (EJC) assembly. Hinders eIF4AIII from non-specifically binding RNA and escorts it to the splicing machinery to promote EJC assembly on mature mRNAs. This chain is Male determiner protein Mdmd(III), found in Musca domestica (House fly).